The primary structure comprises 118 residues: Beta-2-microglobulin (118 aa).

Positions 1-20 (MARFVVLVLLGLLYLSHLDA) are cleaved as a signal peptide. The Ig-like C1-type domain occupies 25-113 (PKVQVYSRHP…TTLSEPKVVK (89 aa)). Cys45 and Cys99 are disulfide-bonded.

This sequence belongs to the beta-2-microglobulin family. Heterodimer of an alpha chain and a beta chain. Beta-2-microglobulin is the beta-chain of major histocompatibility complex class I molecules.

The protein resides in the secreted. Component of the class I major histocompatibility complex (MHC). Involved in the presentation of peptide antigens to the immune system. This is Beta-2-microglobulin (B2M) from Felis catus (Cat).